A 231-amino-acid chain; its full sequence is MPENLAKAICNPLFPALDSMLRAGRHISSEDLDNHALLSDYEVELSAFYQRYNTELVKAPEGFFYLRPRSTSLIARSVLSELDMLVGKVLCFLYLSPERLAHEGIFTNQELYEELIALTDEKKLMKLVTNRASGSDLDREKLFEKVRTSLRRLRRLGMIINVGDSGKFSISEAVFRFGADVRAGDDIREAQLRLIRDGEAVVHTQEPTQASLLADEEEQDYNEQAELEGEA.

A disordered region spans residues 211–231 (SLLADEEEQDYNEQAELEGEA). The segment covering 214–231 (ADEEEQDYNEQAELEGEA) has biased composition (acidic residues).

Belongs to the MukE family. Interacts, and probably forms a ternary complex, with MukF and MukB. The complex formation is stimulated by calcium or magnesium.

It is found in the cytoplasm. It localises to the nucleoid. Functionally, involved in chromosome condensation, segregation and cell cycle progression. May participate in facilitating chromosome segregation by condensation DNA from both sides of a centrally located replisome during cell division. Probably acts via its interaction with MukB and MukF. The sequence is that of Chromosome partition protein MukE from Vibrio vulnificus (strain CMCP6).